The following is a 335-amino-acid chain: 2-acylglycerol O-acyltransferase 2 (335 aa).

2 consecutive transmembrane segments (helical) span residues 24–44 and 104–124; these read WAVS…LLLF and YIMG…NFCT. A glycan (N-linked (GlcNAc...) asparagine) is linked at N206.

Belongs to the diacylglycerol acyltransferase family.

It localises to the endoplasmic reticulum membrane. The protein localises to the cytoplasm. Its subcellular location is the perinuclear region. The enzyme catalyses a 2-acylglycerol + an acyl-CoA = a 1,2-diacylglycerol + CoA. The catalysed reaction is a 2-acylglycerol + an acyl-CoA = a 1,2-diacyl-sn-glycerol + CoA. It carries out the reaction a 2-acylglycerol + an acyl-CoA = a 2,3-diacyl-sn-glycerol + CoA. It catalyses the reaction a 1-acylglycerol + an acyl-CoA = a 1,2-diacylglycerol + CoA. The enzyme catalyses a 1-acylglycerol + an acyl-CoA = a 1,3-diacylglycerol + CoA. The catalysed reaction is 1-O-alkylglycerol + an acyl-CoA = 1-O-alkyl-3-acylglycerol + CoA. It carries out the reaction an acyl-CoA + a 1,2-diacyl-sn-glycerol = a triacyl-sn-glycerol + CoA. Its pathway is glycerolipid metabolism; triacylglycerol biosynthesis. Functionally, involved in glycerolipid synthesis and lipid metabolism. Catalyzes the formation of diacylglycerol, the precursor of triacylglycerol, by transferring the acyl chain of a fatty acyl-CoA to a monoacylglycerol. Plays a central role in absorption of dietary fat in the small intestine by catalyzing the resynthesis of triacylglycerol in enterocytes. Has a preference toward monoacylglycerols containing unsaturated fatty acids in an order of C18:3 &gt; C18:2 &gt; C18:1 &gt; C18:0 at sn-2. Able to use 1-monoalkylglycerol (1-MAkG, 1-O-alkylglycerol) as an acyl acceptor for the synthesis of monoalkyl-monoacylglycerol (MAMAG, 1-O-alkyl-3-acylglycerol or 1-O-alkyl-2-acylglycerol) and subsequently, with lower efficiency, may add another acyl chain producing monoalkyl-diacylglycerol (MADAG, 1-O-alkyl-2,3-diacylglycerol). Possesses weak but significant activity with diacylglycerol as substrate, producing triacylglycerol (triacyl-sn-glycerol). This chain is 2-acylglycerol O-acyltransferase 2 (mogat2), found in Xenopus tropicalis (Western clawed frog).